The sequence spans 223 residues: NLP effector protein 3 (223 aa).

The Conserved undecapeptide motif motif lies at 90 to 100 (AIMYVWYFPKD). Positions 107–113 (GHRHDWE) match the Conserved heptapeptide motif motif.

The protein belongs to the Necrosis inducing protein (NPP1) family.

The protein resides in the secreted. It localises to the host cytoplasm. Probable secreted effector that may act as a pathogen-associated molecular pattern (PAMP) recognized by the plant immune system. Seems not to induce necrosis, neither in several susceptible or resistant Vitis species nor in the dicot model plant Nicotiana benthamiana. In Plasmopara viticola (Downy mildew of grapevine), this protein is NLP effector protein 3.